A 206-amino-acid polypeptide reads, in one-letter code: MSQGLFITLEGPEGAGKTTQLARLEARLRAAGHAVTVTREPGGTPLGTRVREVVLDPAVEIEPLGEFLLYSASRAQLVREVLRPALERGETVLCDRYADSSLAYQGAGRGLSLPLLRQITAEVTGGLTPGLTVLLDLDPALGLQRAARRGQPDRLEQADLTFHRRVRQGFLDLAHAEPQRFLVLDATRPEDELEAEIWAAVSERGH.

Residue 11–18 coordinates ATP; that stretch reads GPEGAGKT.

The protein belongs to the thymidylate kinase family.

The catalysed reaction is dTMP + ATP = dTDP + ADP. In terms of biological role, phosphorylation of dTMP to form dTDP in both de novo and salvage pathways of dTTP synthesis. The sequence is that of Thymidylate kinase (tmk) from Deinococcus radiodurans (strain ATCC 13939 / DSM 20539 / JCM 16871 / CCUG 27074 / LMG 4051 / NBRC 15346 / NCIMB 9279 / VKM B-1422 / R1).